The sequence spans 454 residues: Bifunctional protein GlmU (454 aa).

Residues 1 to 226 (MSLNVVILAA…PIETEGANNR (226 aa)) form a pyrophosphorylase region. Residues 8-11 (LAAG), K22, Q73, 78-79 (GT), 100-102 (YGD), G137, E151, N166, and N224 contribute to the UDP-N-acetyl-alpha-D-glucosamine site. Residue D102 participates in Mg(2+) binding. Residue N224 participates in Mg(2+) binding. Residues 227 to 247 (VQLAALERAYQARRAEELMLA) are linker. An N-acetyltransferase region spans residues 248 to 454 (GANLRDPARI…GWQRPVKKPK (207 aa)). UDP-N-acetyl-alpha-D-glucosamine contacts are provided by R330 and K348. The active-site Proton acceptor is H360. 2 residues coordinate UDP-N-acetyl-alpha-D-glucosamine: Y363 and N374. Acetyl-CoA-binding positions include A377, 383–384 (NY), S402, A420, and R437.

The protein in the N-terminal section; belongs to the N-acetylglucosamine-1-phosphate uridyltransferase family. In the C-terminal section; belongs to the transferase hexapeptide repeat family. Homotrimer. It depends on Mg(2+) as a cofactor.

The protein localises to the cytoplasm. It carries out the reaction alpha-D-glucosamine 1-phosphate + acetyl-CoA = N-acetyl-alpha-D-glucosamine 1-phosphate + CoA + H(+). The enzyme catalyses N-acetyl-alpha-D-glucosamine 1-phosphate + UTP + H(+) = UDP-N-acetyl-alpha-D-glucosamine + diphosphate. The protein operates within nucleotide-sugar biosynthesis; UDP-N-acetyl-alpha-D-glucosamine biosynthesis; N-acetyl-alpha-D-glucosamine 1-phosphate from alpha-D-glucosamine 6-phosphate (route II): step 2/2. It functions in the pathway nucleotide-sugar biosynthesis; UDP-N-acetyl-alpha-D-glucosamine biosynthesis; UDP-N-acetyl-alpha-D-glucosamine from N-acetyl-alpha-D-glucosamine 1-phosphate: step 1/1. It participates in bacterial outer membrane biogenesis; LPS lipid A biosynthesis. In terms of biological role, catalyzes the last two sequential reactions in the de novo biosynthetic pathway for UDP-N-acetylglucosamine (UDP-GlcNAc). The C-terminal domain catalyzes the transfer of acetyl group from acetyl coenzyme A to glucosamine-1-phosphate (GlcN-1-P) to produce N-acetylglucosamine-1-phosphate (GlcNAc-1-P), which is converted into UDP-GlcNAc by the transfer of uridine 5-monophosphate (from uridine 5-triphosphate), a reaction catalyzed by the N-terminal domain. The protein is Bifunctional protein GlmU of Shewanella amazonensis (strain ATCC BAA-1098 / SB2B).